The following is a 435-amino-acid chain: ATP-dependent protease ATPase subunit HslU (435 aa).

ATP contacts are provided by residues Ile18, 60-65 (GVGKTE), Asp248, Glu313, and Arg385.

It belongs to the ClpX chaperone family. HslU subfamily. As to quaternary structure, a double ring-shaped homohexamer of HslV is capped on each side by a ring-shaped HslU homohexamer. The assembly of the HslU/HslV complex is dependent on binding of ATP.

The protein resides in the cytoplasm. Functionally, ATPase subunit of a proteasome-like degradation complex; this subunit has chaperone activity. The binding of ATP and its subsequent hydrolysis by HslU are essential for unfolding of protein substrates subsequently hydrolyzed by HslV. HslU recognizes the N-terminal part of its protein substrates and unfolds these before they are guided to HslV for hydrolysis. The polypeptide is ATP-dependent protease ATPase subunit HslU (Rhizobium etli (strain ATCC 51251 / DSM 11541 / JCM 21823 / NBRC 15573 / CFN 42)).